The following is a 245-amino-acid chain: 8-amino-3,8-dideoxy-manno-octulosonate cytidylyltransferase (245 aa).

The protein belongs to the KdsB family.

The protein localises to the cytoplasm. The enzyme catalyses 8-amino-3,8-dideoxy-alpha-D-manno-octulosonate + CTP = CMP-8-amino-3,8-dideoxy-alpha-D-manno-oct-2-ulosonate + diphosphate. The protein operates within bacterial outer membrane biogenesis; lipopolysaccharide biosynthesis. Activates KDO8N (a required 8-carbon sugar) for incorporation into bacterial lipopolysaccharide in the Shewanella genus. The sequence is that of 8-amino-3,8-dideoxy-manno-octulosonate cytidylyltransferase from Shewanella pealeana (strain ATCC 700345 / ANG-SQ1).